Consider the following 457-residue polypeptide: Argininosuccinate lyase (457 aa).

It belongs to the lyase 1 family. Argininosuccinate lyase subfamily.

It is found in the cytoplasm. It catalyses the reaction 2-(N(omega)-L-arginino)succinate = fumarate + L-arginine. Its pathway is amino-acid biosynthesis; L-arginine biosynthesis; L-arginine from L-ornithine and carbamoyl phosphate: step 3/3. This is Argininosuccinate lyase from Escherichia coli O127:H6 (strain E2348/69 / EPEC).